The following is a 185-amino-acid chain: Elongation factor P (185 aa).

This sequence belongs to the elongation factor P family.

The protein localises to the cytoplasm. The protein operates within protein biosynthesis; polypeptide chain elongation. In terms of biological role, involved in peptide bond synthesis. Stimulates efficient translation and peptide-bond synthesis on native or reconstituted 70S ribosomes in vitro. Probably functions indirectly by altering the affinity of the ribosome for aminoacyl-tRNA, thus increasing their reactivity as acceptors for peptidyl transferase. The sequence is that of Elongation factor P from Clostridium tetani (strain Massachusetts / E88).